We begin with the raw amino-acid sequence, 471 residues long: Alkaline phosphatase (471 aa).

Positions 1–21 (MKQSTIALALLPLLFTPVTKA) are cleaved as a signal peptide. Aspartate 73 is a Mg(2+) binding site. Aspartate 73 contacts Zn(2+). Serine 124 acts as the Phosphoserine intermediate in catalysis. 2 residues coordinate Mg(2+): aspartate 175 and threonine 177. 2 disulfide bridges follow: cysteine 190–cysteine 200 and cysteine 308–cysteine 358. Glutamate 344 is a binding site for Mg(2+). 5 residues coordinate Zn(2+): aspartate 349, histidine 353, aspartate 391, histidine 392, and histidine 434.

This sequence belongs to the alkaline phosphatase family. Isozymes 1 and 3 are a dimer of identical chains, isozyme 2 is a dimer of heterogeneous chains, one of each of the subunits from isozymes 1 and 3. Mg(2+) serves as cofactor. It depends on Zn(2+) as a cofactor.

It is found in the periplasm. The catalysed reaction is a phosphate monoester + H2O = an alcohol + phosphate. This Escherichia coli (strain K12) protein is Alkaline phosphatase (phoA).